A 275-amino-acid polypeptide reads, in one-letter code: Large ribosomal subunit protein uL2c (275 aa).

Residues 225-275 are disordered; the sequence is MNPCDHPHGGGEGRSPIGRPRPVSPWGKPALGQRTRKGHKYSDQMILRRRK.

It belongs to the universal ribosomal protein uL2 family. In terms of assembly, part of the 50S ribosomal subunit.

It localises to the plastid. Its subcellular location is the chloroplast. In Oltmannsiellopsis viridis (Marine flagellate), this protein is Large ribosomal subunit protein uL2c (rpl2).